Reading from the N-terminus, the 258-residue chain is MIRFTLALAVIGVTFAASTPQIETNPNLEIIGGHDANIIDYPWQISFQHRLHHFCGGFLISDTWVVTAAHCIYEGYSDTENLNIRVGSSEWSAKGKLHDVKRYITHPQYNITTMDNDIALLELALPVDLNQSVRPAKLPVAGQEIPDNAQLTITGWGATYVGGYNEYTLQVVTIPTVNINVCQSAITNDTITNNMFCAGLIGVGGKDSCSGDSGGPAVIDGQVVGIVSWGYSCADPKYPGIYTKVSAFRDWINEETEI.

An N-terminal signal peptide occupies residues 1 to 16 (MIRFTLALAVIGVTFA). Positions 17-29 (ASTPQIETNPNLE) are cleaved as a propeptide — activation peptide. The Peptidase S1 domain maps to 30-257 (IIGGHDANII…FRDWINEETE (228 aa)). A disulfide bridge links Cys55 with Cys71. Residue His70 is the Charge relay system of the active site. An N-linked (GlcNAc...) asparagine glycan is attached at Asn110. Asp117 functions as the Charge relay system in the catalytic mechanism. Residues Asn130 and Asn188 are each glycosylated (N-linked (GlcNAc...) asparagine). Cystine bridges form between Cys182–Cys197 and Cys209–Cys233. The active-site Charge relay system is Ser213.

It belongs to the peptidase S1 family. Expressed in larval carcasses and gut, and adult gut.

The protein resides in the secreted. The catalysed reaction is Preferential cleavage: Arg-|-Xaa, Lys-|-Xaa.. This chain is Trypsin, found in Phaedon cochleariae (Mustard beetle).